A 205-amino-acid polypeptide reads, in one-letter code: MAMQKLFTYIYEFIEYRKMVLLEEKVPYDKFVQMVLNTGFFRINAETLNHGIVSVFIFGANGKYVHHGGDMRTLLTNTLNEKKHYEELILIVDKPVLSKKNILDIIVEQRAANPTIVINIYPYHLFCINIPKVSAIPKHKLITQEEAQEFLGREYLQPQDLMQISASDPPVVWLGGRPGDFVQIERPSETAMHAVVIRFITKSKI.

It belongs to the archaeal RpoH/eukaryotic RPB5 RNA polymerase subunit family. Part of the viral DNA-directed RNA polymerase that consists of 8 polII-like subunits (RPB1, RPB2, RPB3, RPB5, RPB6, RPB7, RPB9, RPB10), a capping enzyme and a termination factor.

The protein localises to the host cytoplasm. It localises to the virion. Functionally, component of the DNA-directed RNA polymerase (RNAP) that catalyzes the transcription in the cytoplasm of viral DNA into RNA using the four ribonucleoside triphosphates as substrates. The protein is DNA-directed RNA polymerase RPB5 homolog of Ornithodoros (relapsing fever ticks).